The primary structure comprises 61 residues: UPF0434 protein PST_2635 (61 aa).

Belongs to the UPF0434 family.

The sequence is that of UPF0434 protein PST_2635 from Stutzerimonas stutzeri (strain A1501) (Pseudomonas stutzeri).